Consider the following 530-residue polypeptide: uncharacterized protein (530 aa).

The segment at 1–33 (MNNMSLKFPDIAINSSESSDDEDPSSKNEKKDG) is disordered. A compositionally biased stretch (basic and acidic residues) spans 24-33 (PSSKNEKKDG). The next 12 helical transmembrane spans lie at 83–103 (FFILPIMCITYGMQYLDKTAV), 124–144 (WLSTIFYLGYMIAQYPAGYLL), 147–167 (FPISYFMFIAAFLWSACVLLM), 181–201 (FFSGVFEGCVNPAFVALTAMW), 211–231 (VVSWYAFNGVAIMVGALLGYG), 244–264 (YPFLVIGAISTAWSFVYLFFP), 323–343 (VTNAMSVFSALIIQGIGYSGI), 346–366 (TLLTLPSGAFAVAGMIASGIF), 375–395 (IPLAMTTSSLTIVGSIMIWKI), 404–424 (VVGVWLFCTISSGNAVILSLL), 436–456 (TVNATMFLFYSIGNIVSPQLF), and 471–491 (SLVSVCLFEGVLALLAFYYIF).

Belongs to the major facilitator superfamily. Allantoate permease family.

Its subcellular location is the endoplasmic reticulum. The protein localises to the membrane. This is an uncharacterized protein from Schizosaccharomyces pombe (strain 972 / ATCC 24843) (Fission yeast).